Consider the following 655-residue polypeptide: Probable replication restart protein PriA (655 aa).

Zn(2+) contacts are provided by cysteine 368, cysteine 371, cysteine 377, cysteine 380, cysteine 396, cysteine 399, cysteine 408, and cysteine 411.

Belongs to the helicase family. PriA subfamily. As to quaternary structure, component of the replication restart primosome. It depends on Zn(2+) as a cofactor.

Initiates the restart of stalled replication forks, which reloads the replicative helicase on sites other than the origin of replication. Recognizes and binds to abandoned replication forks and remodels them to uncover a helicase loading site. Promotes assembly of the primosome at these replication forks. This is Probable replication restart protein PriA from Mycobacterium bovis (strain ATCC BAA-935 / AF2122/97).